The sequence spans 663 residues: 4-hydroxy-3-methylbut-2-en-1-yl diphosphate synthase (flavodoxin) (663 aa).

4 residues coordinate [4Fe-4S] cluster: C568, C571, C602, and E609.

The protein belongs to the IspG family. Requires [4Fe-4S] cluster as cofactor.

The catalysed reaction is (2E)-4-hydroxy-3-methylbut-2-enyl diphosphate + oxidized [flavodoxin] + H2O + 2 H(+) = 2-C-methyl-D-erythritol 2,4-cyclic diphosphate + reduced [flavodoxin]. It participates in isoprenoid biosynthesis; isopentenyl diphosphate biosynthesis via DXP pathway; isopentenyl diphosphate from 1-deoxy-D-xylulose 5-phosphate: step 5/6. Functionally, converts 2C-methyl-D-erythritol 2,4-cyclodiphosphate (ME-2,4cPP) into 1-hydroxy-2-methyl-2-(E)-butenyl 4-diphosphate. The polypeptide is 4-hydroxy-3-methylbut-2-en-1-yl diphosphate synthase (flavodoxin) (Leptospira borgpetersenii serovar Hardjo-bovis (strain JB197)).